The sequence spans 504 residues: ATP synthase subunit alpha (504 aa).

G170–T177 serves as a coordination point for ATP.

This sequence belongs to the ATPase alpha/beta chains family. As to quaternary structure, F-type ATPases have 2 components, CF(1) - the catalytic core - and CF(0) - the membrane proton channel. CF(1) has five subunits: alpha(3), beta(3), gamma(1), delta(1), epsilon(1). CF(0) has four main subunits: a(1), b(1), b'(1) and c(9-12).

The protein localises to the cellular thylakoid membrane. It catalyses the reaction ATP + H2O + 4 H(+)(in) = ADP + phosphate + 5 H(+)(out). Its function is as follows. Produces ATP from ADP in the presence of a proton gradient across the membrane. The alpha chain is a regulatory subunit. The chain is ATP synthase subunit alpha from Prochlorococcus marinus (strain NATL1A).